The following is a 222-amino-acid chain: uncharacterized protein (222 aa).

This is an uncharacterized protein from Acanthamoeba polyphaga mimivirus (APMV).